Consider the following 39-residue polypeptide: Phosphatase RapI inhibitor (39 aa).

The propeptide occupies 1-34; the sequence is MKISRILLAAVILSSVFSITYLQSDHNTEIKVAA.

This sequence belongs to the Phr family. In terms of processing, contains a predicted signal peptide cleavage site in the N-terminal region, however the propeptide is probably subject to only one processing event, at the N-terminal end of the mature peptide.

It is found in the secreted. Its subcellular location is the cytoplasm. Functionally, intercellular signaling molecule that inhibits excision of the mobile genetic element ICEBs1 when cells are crowded by cells that contain ICEBs1 and produce the PhrI peptide. Secreted during production, but the mature peptide acts intracellularly, indicating that it needs to be imported into the cell to function. Acts by inhibiting RapI activity. The protein is Phosphatase RapI inhibitor (phrI) of Bacillus subtilis (strain 168).